Reading from the N-terminus, the 229-residue chain is Vacuolar protein-sorting-associated protein 60 (229 aa).

Residues 9–155 (NKKSHDQLLQ…QGDELQEVLA (147 aa)) are a coiled coil. Residue serine 12 is modified to Phosphoserine. The interaction with VTA1 stretch occupies residues 128–159 (INIDKLQDMQDEMLDLIEQGDELQEVLAMNNN). The disordered stretch occupies residues 186–229 (PTSENSLGNDMPSYLLGANAPPAFIDEEPNLDTEDKNKALESAQ). Basic and acidic residues predominate over residues 218–229 (TEDKNKALESAQ).

Belongs to the SNF7 family. Interacts with VTA1; the interaction occurs at he endosomal membrane.

Its subcellular location is the endosome membrane. The protein resides in the vacuole membrane. Has a role in a late stage of multivesicular body (MVB) formation. Can stimulate VPS4 ATPase activity via VTA1. This chain is Vacuolar protein-sorting-associated protein 60 (VPS60), found in Saccharomyces cerevisiae (strain ATCC 204508 / S288c) (Baker's yeast).